Consider the following 3164-residue polypeptide: MTDKSIIILSLMVFHSSFINGKTCRRQSVEEWHPQPSSYVVNWTLTENICLDFYRDCWFLGVNTKIDTSGNQAVPQICPLQIQLGDILVISSEPSLQFPEINLMNVSETSFIGCVQNTTTEDQLLFGCRLKGMHTVNSKWLSVGTHYFITVMASGPSPCPLGLRLNVTVKQQFCQESLSSEFCSGHGKCLSEAWSKTYSCHCHPPFSGKYCQELDACSFKPCKNNGSCINKRENWDGQGYECVCHPPFTGKNCSEIIGQCQPHVCFHGNCSNITSNSFICECDEQFSGPFCEMSTKPCVSLLCWKRGICPNSSSAYTYECPKGSSSQNGETDVSECSLVPCQNGTDCIQISNDVMCICSPIFTDLLCKSIQTSCESFSLRNNATCKKWEKDYHCSCISGFTEKNCEKAIDHCRLLSINCLNEEWCFNIIGRFNYVCIPGCPKNPCWFLKNVYLIHQHLCYCGVTFHGICQDKGPAQFEYVWQLGFAGSEGEKCQGVIDAYFFLAANCTEDAICVNDPEDYNSSCRFPREGTKEICANGCSCLSEEDSQEYLYLCFLRWAGNMYLENTTDDQENECQHEAICKDEINRPRCSCSLSYIGRLCVVNVDYCLGNQSISVHGLCLALSHKCNCISLQRYERNICEIDTEDCKSVSCKNGTTSIHLRGYFFCKCVPGFKGTQREIDIDECASHPCKNGATCIDQPGNYFCQCVPPFKVVDGFSCLGNPGYVGIRCEQDIDDCILNACEHNSTCKDLHLSYQCVCLSGWEGNFSEQESNECKMNPCKNNSTCIDLYKSYRCECTSGWTGQNCSEEINECDSDPCMNGGLCHESTIPGQFVCLCPPLYTGRFCHQRYNPCDLLHNPCRNNSTCLALVDGNQHCICREEFEGKNCEIDVKECLFLSCQDYGDCEDMVNNFRCICRPGFSGSLCEIEINECSSEPCKNNGTCVDLTNRFFCNCEPGYHGPFCELDVNKCKISPCLDEENCVYRTDGYNCLCAPGYTGINCEINLDECLSEPCLHDGVCIDGINHYTCDCKSGFFGTHCETNANDCLSNPCLHGRCTELINEYPCSCDADGTSTQCKIKINDCTSIPCMNEGFCQKSAHGFTCICPRGYTGAYCEKSIDNCAEPEFNSVICLNGGICVDGPGHTFDCRCLPGFSGQFCEININECSSSPCLHGADCEDHINGYVCKCQPGWSGHHCEKELECIPNSCVHELCMENEPGSTCLCTPGFMTCSTGLLCGDEIRRITCLTPIFQRTDPISTQTYTVPPSETLVSSFPSIKATRIPAIMDTYPVDQGPKQTGIVKHDILPTTGLAALRISTPLESYLLEELIVTRELSAKHGLLSSADVSSSRFLNFGIHDPAQIVQDKTSVSHMPIRTSAATLGFFFPDRRARTPFIMSSVMSDFIFPTQSLLFENYQTVASSATPTTSVIRSIPGADIELNRQSLLSRGFLLTAASISATPVVSRGAQEDIEEYSADSLISRREHWRLLSPSMSPIFPAKIIISKQVTILNSSALHRFGTKAFNPSEYQAITEASSNQRLTNIKSQAADSLRELSQTCATCSMTEIKSSREFSDQVLHSKQSHFYETFWMNSAILASWCALMGAQTITSGHSFSSATEITPSVAFTEVPSLFPSKKSAKRTILSSSLEESITLSSNLDVNLCLDKTCLSIVPSQTISSDLMNSDLTSKMTTDELSVSANILKLLKIRQYGITMGPTEVLNQDSLLDMEKSKGSHTPFKLHPSDSSLDFELNLQIYPDVTLKTYSEITHANDFKNTLPPLTGSVPDFSEVTTNVAFYTVSATPALSIQTSSSMSVIRPDWPYFTDYMTSLKKEVKTSSEWSKWELQPSVQYQEFPTASWHLPFTRSLTLSSLESILAPQQLTISDFSCVRYYGDSYLEFQNVVLNPQNNISLEFQTFSSYGLLLYVKQDSNLVDGFFIQLFIENGTLKYHFYCPGEAKFKSINTTIRVDDGQKYTLLIRQELYPCKAELTILGRNTQTCESISHVLGKPLPKSGSVFIGGFPDLHGKIQMPVPVKNFTGCIEVIEINNWRSFIPSKAVKNYHINNCRSQGFMLSPTASFVDVSDVTQGVDTMWTSVSPSVAAPSVCQQDVCHNGGTCHPIFLSRGIVSFQCDCPLHFTGRFCEKDASLFFPSFNGNSYLELPFLKFVLEKEHNRTVTIYLTIKTNSLNGTILYSNGNNFGKQFLHLFLVEGRPSVKYGCGNSQNILTVSANYSINTNAFTPITIRYTTPVGSPGVVCMIEMTADGKPPVQKKDTEISQASQAYFESMFLGHIPANVQIHKKSGPVYGFRGCILDLQVNNKEFFIIDEARHGKNIENCHVPWCAHHLCRNNGTCISDNENLFCECPRLYSGKLCQFASCENNPCGNGATCVPKSGTDIVCLCPYGRSGPLCTDAINITQPRFSGTDAFGYTSFLAYSRISDISFHYEFHLKFQLANNHSALQNNLIFFTGQKGHGLNGDDFLAVGLLNGSVVYSYNLGSGIASIRSEPLNLSLGVHTVHLGKFFQEGWLKVDDHKNKSIIAPGRLAGLNVFSQFYVGGYSEYTPDLLPNGADFKNGFQGCIFTLQVRTEKDGHFRGLGNPEGHPNAGRSVGQCHASPCSLMKCGNGGTCIESGTSVYCNCTTGWKGAFCTETVSTCDPEHDPPHHCSRGATCISLPHGYTCFCPLGTTGIYCEQALILIVILEKPKPAEWKVKKEALSISDPSFRSNELSWMSFASFHVRKKTHIQLQFQPLAADGILFYAAQHLKAQSGDFLCISLVNSSVQLRYNLGDRTIILETLQKVTINGSTWHIIKAGRVGAEGYLDLDGINVTEKASTKMSSLDTNTDFYIGGVSSLNLVNPMAIENEPVGFQGCIRQVIINNQELQLTEFGAKGGSNVGDCDGTACGYNTCRNGGECTVNGTTFSCRCLPDWAGNTCNQSVYCLNNLCLHQSLCIPNQSFSYSCLCTLGWVGRYCENKTSFSTAKFMGNSYIKYIDPNYRMRNLQFTTISLNFSTTKTEGLIVWMGTAQNEENDFLAIGLHNQTLKIAVNLGERISVPMSYNNGTFCCNKWHHVVVIQNQTLIKAYVNNSLILSEDIDPHKNFVALNYDGICYLGGFEYGRKVSIVTQEIFKTNFVGKIKDVFFQDPKKIELIKLEGYNVYDGDEQNEVT.

A signal peptide spans 1 to 21 (MTDKSIIILSLMVFHSSFING). 4 N-linked (GlcNAc...) asparagine glycosylation sites follow: Asn42, Asn105, Asn117, and Asn166. 3 EGF-like domains span residues 170-212 (KQQF…KYCQ), 213-254 (ELDA…KNCS), and 256-292 (IIGQ…PFCE). 9 cysteine pairs are disulfide-bonded: Cys174–Cys189, Cys183–Cys200, Cys202–Cys211, Cys217–Cys228, Cys222–Cys242, Cys244–Cys253, Cys260–Cys270, Cys265–Cys280, and Cys282–Cys291. N-linked (GlcNAc...) asparagine glycans are attached at residues Asn225, Asn252, Asn269, and Asn272. Residues Asn311 and Asn343 are each glycosylated (N-linked (GlcNAc...) asparagine). EGF-like domains are found at residues 332-368 (DVSE…LLCK) and 370-406 (IQTS…KNCE). Cystine bridges form between Cys336–Cys347, Cys341–Cys356, Cys358–Cys367, Cys374–Cys385, and Cys396–Cys405. Asn382 is a glycosylation site (N-linked (GlcNAc...) asparagine). Asn506, Asn521, and Asn566 each carry an N-linked (GlcNAc...) asparagine glycan. An EGF-like 6 domain is found at 567-602 (TTDDQENECQHEAICKDEINRPRCSCSLSYIGRLCV). 2 disulfide bridges follow: Cys575/Cys590 and Cys592/Cys601. 2 N-linked (GlcNAc...) asparagine glycosylation sites follow: Asn611 and Asn654. Residues 643–679 (DTEDCKSVSCKNGTTSIHLRGYFFCKCVPGFKGTQRE) enclose the EGF-like 7 domain. 6 cysteine pairs are disulfide-bonded: Cys652-Cys667, Cys685-Cys696, Cys690-Cys705, Cys707-Cys719, Cys737-Cys748, and Cys742-Cys757. Positions 681–720 (DIDECASHPCKNGATCIDQPGNYFCQCVPPFKVVDGFSCL) constitute an EGF-like 8; calcium-binding domain. Residues 733–769 (DIDDCILNACEHNSTCKDLHLSYQCVCLSGWEGNFSE) form the EGF-like 9; calcium-binding domain. 5 N-linked (GlcNAc...) asparagine glycosylation sites follow: Asn745, Asn766, Asn782, Asn783, and Asn805. The region spanning 771-807 (ESNECKMNPCKNNSTCIDLYKSYRCECTSGWTGQNCS) is the EGF-like 10; calcium-binding domain. 33 disulfide bridges follow: Cys775-Cys786, Cys780-Cys795, Cys797-Cys806, Cys813-Cys824, Cys818-Cys835, Cys837-Cys846, Cys853-Cys866, Cys860-Cys876, Cys878-Cys887, Cys894-Cys905, Cys899-Cys914, Cys916-Cys925, Cys932-Cys943, Cys937-Cys952, Cys954-Cys963, Cys970-Cys981, Cys975-Cys990, Cys992-Cys1001, Cys1008-Cys1019, Cys1013-Cys1028, Cys1030-Cys1039, Cys1046-Cys1056, Cys1051-Cys1065, Cys1067-Cys1076, Cys1083-Cys1094, Cys1088-Cys1103, Cys1105-Cys1114, Cys1121-Cys1137, Cys1131-Cys1147, Cys1149-Cys1158, Cys1165-Cys1176, Cys1170-Cys1185, and Cys1187-Cys1196. EGF-like domains lie at 809–847 (EINE…RFCH), 849–888 (RYNP…KNCE), and 890–926 (DVKE…SLCE). 2 N-linked (GlcNAc...) asparagine glycosylation sites follow: Asn862 and Asn863. Positions 928–964 (EINECSSEPCKNNGTCVDLTNRFFCNCEPGYHGPFCE) constitute an EGF-like 14; calcium-binding domain. Asn940 is a glycosylation site (N-linked (GlcNAc...) asparagine). The 37-residue stretch at 966-1002 (DVNKCKISPCLDEENCVYRTDGYNCLCAPGYTGINCE) folds into the EGF-like 15 domain. Positions 1004–1040 (NLDECLSEPCLHDGVCIDGINHYTCDCKSGFFGTHCE) constitute an EGF-like 16; calcium-binding domain. EGF-like domains follow at residues 1042–1077 (NAND…TQCK), 1079–1115 (KIND…AYCE), and 1117–1159 (SIDN…QFCE). One can recognise an EGF-like 20; calcium-binding domain in the interval 1161–1197 (NINECSSSPCLHGADCEDHINGYVCKCQPGWSGHHCE). N-linked (GlcNAc...) asparagine glycans are attached at residues Asn1509, Asn1522, Asn1906, Asn1941, Asn1960, and Asn2033. The Laminin G-like 1 domain maps to 1883–2063 (FSCVRYYGDS…AVKNYHINNC (181 aa)). 4 cysteine pairs are disulfide-bonded: Cys2037–Cys2063, Cys2103–Cys2114, Cys2108–Cys2128, and Cys2130–Cys2139. The region spanning 2099–2140 (APSVCQQDVCHNGGTCHPIFLSRGIVSFQCDCPLHFTGRFCE) is the EGF-like 21 domain. Residues 2145-2339 (LFFPSFNGNS…NIENCHVPWC (195 aa)) form the Laminin G-like 2 domain. N-linked (GlcNAc...) asparagine glycosylation is found at Asn2170, Asn2185, and Asn2228. Disulfide bonds link Cys2308/Cys2339, Cys2339/Cys2350, Cys2344/Cys2359, Cys2375/Cys2386, Cys2380/Cys2396, and Cys2398/Cys2407. 2 consecutive EGF-like domains span residues 2335–2368 (HVPW…YSGK) and 2371–2408 (QFAS…PLCT). A glycan (N-linked (GlcNAc...) asparagine) is linked at Asn2347. N-linked (GlcNAc...) asparagine glycans are attached at residues Asn2412, Asn2453, Asn2484, Asn2506, and Asn2532. The Laminin G-like 3 domain maps to 2419 to 2609 (SGTDAFGYTS…PNAGRSVGQC (191 aa)). 3 cysteine pairs are disulfide-bonded: Cys2576-Cys2609, Cys2614-Cys2625, and Cys2619-Cys2634. 2 consecutive EGF-like domains span residues 2610–2646 (HASP…AFCT) and 2648–2689 (TVST…IYCE). A glycan (N-linked (GlcNAc...) asparagine) is linked at Asn2635. Intrachain disulfides connect Cys2636–Cys2645, Cys2652–Cys2668, Cys2662–Cys2677, and Cys2679–Cys2688. The region spanning 2717–2895 (DPSFRSNELS…AKGGSNVGDC (179 aa)) is the Laminin G-like 4 domain. 3 N-linked (GlcNAc...) asparagine glycosylation sites follow: Asn2775, Asn2800, and Asn2824. Cystine bridges form between Cys2868–Cys2895, Cys2900–Cys2911, Cys2905–Cys2920, and Cys2922–Cys2931. EGF-like domains follow at residues 2896 to 2932 (DGTA…NTCN) and 2933 to 2970 (QSVY…RYCE). Asn2914 carries N-linked (GlcNAc...) asparagine glycosylation. Residue Asn2932 is glycosylated (N-linked (GlcNAc...) asparagine). 3 cysteine pairs are disulfide-bonded: Cys2937/Cys2948, Cys2942/Cys2958, and Cys2960/Cys2969. The N-linked (GlcNAc...) asparagine glycan is linked to Asn2951. N-linked (GlcNAc...) asparagine glycans are attached at residues Asn2971, Asn3006, Asn3036, Asn3057, Asn3073, and Asn3082. In terms of domain architecture, Laminin G-like 5 spans 2975 to 3164 (FSTAKFMGNS…YDGDEQNEVT (190 aa)).

This sequence belongs to the EYS family.

Its subcellular location is the cell projection. It is found in the cilium. The protein resides in the photoreceptor outer segment. The protein localises to the cytoplasm. It localises to the cytoskeleton. Its subcellular location is the cilium axoneme. It is found in the microtubule organizing center. The protein resides in the centrosome. The protein localises to the secreted. It localises to the extracellular space. Its subcellular location is the extracellular matrix. It is found in the interphotoreceptor matrix. Required to maintain the integrity of photoreceptor cells. Specifically required for normal morphology of the photoreceptor ciliary pocket, and might thus facilitate protein trafficking between the photoreceptor inner and outer segments via the transition zone. The protein is Protein eyes shut homolog (EYS) of Pongo abelii (Sumatran orangutan).